We begin with the raw amino-acid sequence, 539 residues long: Membrane protein insertase YidC (539 aa).

The next 5 helical transmembrane spans lie at 6–26 (TLLV…WQVA), 341–361 (SVIQ…TFIV), 416–436 (LGGC…YWAL), 454–474 (LSAQ…MFLI), and 495–515 (PVMF…YWLV).

The protein belongs to the OXA1/ALB3/YidC family. Type 1 subfamily. As to quaternary structure, interacts with the Sec translocase complex via SecD. Specifically interacts with transmembrane segments of nascent integral membrane proteins during membrane integration.

The protein resides in the cell inner membrane. Its function is as follows. Required for the insertion and/or proper folding and/or complex formation of integral membrane proteins into the membrane. Involved in integration of membrane proteins that insert both dependently and independently of the Sec translocase complex, as well as at least some lipoproteins. Aids folding of multispanning membrane proteins. The chain is Membrane protein insertase YidC from Vibrio vulnificus (strain CMCP6).